Here is a 108-residue protein sequence, read N- to C-terminus: uncharacterized protein (108 aa).

An HTH cro/C1-type domain is found at 20–74 (VRQRRTALILDQETLARRIGVSFQQIQKYERGRNRISASRLYDIAKALAVPIDYF). Residues 31–50 (QETLARRIGVSFQQIQKYER) constitute a DNA-binding region (H-T-H motif).

This is an uncharacterized protein from Rhodospirillum rubrum.